Reading from the N-terminus, the 181-residue chain is MLSKFLTMEYLVHPGTLSLAAGVACGMCLGWGLRSHLGMFPQNSTSEANRDTETGTEASILGESGEYKMILVVRTDLKMGKGKVAAQCSHAAVSAYKQTQRRSPQVLKEWEYCGQPKVVVKAPDEDTLIQLLTHAKTLGLTVSLIQDAGRTQIEPGSRTVLGIGPGPVELIDEVTGHLKLY.

Residues 10 to 32 (YLVHPGTLSLAAGVACGMCLGWG) form a helical membrane-spanning segment. Residues Lys78, Lys83, Lys97, Lys108, Lys117, and Lys179 each participate in a glycyl lysine isopeptide (Lys-Gly) (interchain with G-Cter in ubiquitin) cross-link.

Belongs to the PTH2 family. In terms of assembly, monomer. In terms of processing, ubiquitinated by PRKN during mitophagy, leading to its degradation and enhancement of mitophagy. Deubiquitinated by USP30.

The protein resides in the mitochondrion outer membrane. It carries out the reaction an N-acyl-L-alpha-aminoacyl-tRNA + H2O = an N-acyl-L-amino acid + a tRNA + H(+). Its function is as follows. Peptidyl-tRNA hydrolase which releases tRNAs from the ribosome during protein synthesis. Promotes caspase-independent apoptosis by regulating the function of two transcriptional regulators, AES and TLE1. The sequence is that of Peptidyl-tRNA hydrolase 2, mitochondrial (Ptrh2) from Mus musculus (Mouse).